Reading from the N-terminus, the 364-residue chain is Cyclin-D3-2 (364 aa).

The interval 331-364 (PPGRPIKRGAAAATTADPLPADEESRDAWPPYAA) is disordered. Low complexity predominate over residues 340–349 (AAAATTADPL).

Belongs to the cyclin family. Cyclin D subfamily.

In Oryza sativa subsp. japonica (Rice), this protein is Cyclin-D3-2 (CYCD3-2).